The following is a 149-amino-acid chain: Ribose-5-phosphate isomerase B (149 aa).

9–10 is a D-ribulose 5-phosphate binding site; sequence DH. The active-site Proton acceptor is Cys66. 67–71 contributes to the D-ribulose 5-phosphate binding site; that stretch reads GTGVG. The Proton donor role is filled by His99. Residues Asn100, Arg110, Arg133, and Arg137 each contribute to the D-ribulose 5-phosphate site.

It belongs to the LacAB/RpiB family. As to quaternary structure, homodimer, and homotetramer.

The enzyme catalyses aldehydo-D-ribose 5-phosphate = D-ribulose 5-phosphate. It catalyses the reaction D-allose 6-phosphate = D-allulose 6-phosphate. It participates in carbohydrate degradation; pentose phosphate pathway; D-ribose 5-phosphate from D-ribulose 5-phosphate (non-oxidative stage): step 1/1. With respect to regulation, inhibited by iodoacetate and glucose 6-phosphate. Functionally, catalyzes the interconversion of ribulose-5-P and ribose-5-P. It probably also has activity on D-allose 6-phosphate. The sequence is that of Ribose-5-phosphate isomerase B from Escherichia coli (strain K12).